The chain runs to 132 residues: SGKKVDAWMGIPYAQPPLGPLRFRHPRPAERWTGVLNATKPPNSCVQIVDTVFGDFPGATMWNPNTPLSEDCLYINVVVPRPRPKNAAVMLWIFGGGFYSGTATLDVYDHRTLASEENVIVVSLQYRVASLG.

Residue N37 is glycosylated (N-linked (GlcNAc...) asparagine). Cysteines 45 and 72 form a disulfide.

The protein belongs to the type-B carboxylesterase/lipase family.

It is found in the synapse. The protein resides in the secreted. The protein localises to the cell membrane. The catalysed reaction is acetylcholine + H2O = choline + acetate + H(+). In terms of biological role, rapidly hydrolyzes choline released into the synapse. This Culex pipiens pipiens (Northern house mosquito) protein is Acetylcholinesterase (ACE-1).